The sequence spans 436 residues: 5-hydroxytryptamine receptor 6 (436 aa).

Residues 1-27 lie on the Extracellular side of the membrane; sequence MVPEPGPVNSSTPAWGPGPPPAPGGSG. The N-linked (GlcNAc...) asparagine glycan is linked to Asn-9. The helical transmembrane segment at 28–52 threads the bilayer; sequence WVAAALCVVIVLTAAANSLLIVLIC. Over 53 to 62 the chain is Cytoplasmic; it reads TQPALRNTSN. Residues 63–88 traverse the membrane as a helical segment; that stretch reads FFLVSLFTSDLMVGLVVMPPAMLNAL. At 89 to 96 the chain is on the extracellular side; it reads YGRWVLAR. The chain crosses the membrane as a helical span at residues 97 to 122; it reads GLCLLWTAFDVMCCSASILNLCLISL. Cys-99 and Cys-180 form a disulfide bridge. Residue Asp-106 participates in serotonin binding. Residues 123 to 142 lie on the Cytoplasmic side of the membrane; sequence DRYLLILSPLRYKLRMTAPR. A helical membrane pass occupies residues 143–167; it reads ALALILGAWSLAALASFLPLLLGWH. The Extracellular portion of the chain corresponds to 168-185; it reads ELGKARTPAPGQCRLLAS. A helical transmembrane segment spans residues 186 to 209; the sequence is LPFVLVASGVTFFLPSGAICFTYC. Topologically, residues 210–266 are cytoplasmic; sequence RILLAARKQAVQVASLTTGTAGQALETLQVPRTPRPGMESADSRRLATKHSRKALKA. Residues 267 to 293 traverse the membrane as a helical segment; the sequence is SLTLGILLGMFFVTWLPFFVANIAQAV. Residue Asn-288 coordinates serotonin. The Extracellular segment spans residues 294–299; sequence CDCISP. Residues 300 to 323 traverse the membrane as a helical segment; that stretch reads GLFDVLTWLGYCNSTMNPIIYPLF. Topologically, residues 324-436 are cytoplasmic; the sequence is MRDFKRALGR…RYGRIHSVPP (113 aa).

It belongs to the G-protein coupled receptor 1 family. In terms of assembly, interacts with MTOR, RPTOR and NF1. Interacts with CDK5. Localized exclusively in the central nervous system, predominantly in the corpus striatum but also in various limbic and cortical regions.

The protein resides in the cell membrane. Functionally, G-protein coupled receptor for 5-hydroxytryptamine (serotonin), a biogenic hormone that functions as a neurotransmitter, a hormone and a mitogen. Also has a high affinity for tricyclic psychotropic drugs. Ligand binding causes a conformation change that triggers signaling via guanine nucleotide-binding proteins (G proteins) and modulates the activity of downstream effectors. HTR6 is coupled to G(s) G alpha proteins and mediates activation of adenylate cyclase activity. Controls pyramidal neurons migration during corticogenesis, through the regulation of CDK5 activity. Is an activator of mTOR signaling. The sequence is that of 5-hydroxytryptamine receptor 6 (Htr6) from Rattus norvegicus (Rat).